Consider the following 287-residue polypeptide: S-methyl-5'-thioadenosine phosphorylase (287 aa).

Phosphate is bound by residues T13 and 55–56; that span reads RH. M186 serves as a coordination point for substrate. T187 is a phosphate binding site. 210–212 serves as a coordination point for substrate; the sequence is DYD.

This sequence belongs to the PNP/MTAP phosphorylase family. MTAP subfamily. As to quaternary structure, homohexamer. Dimer of a homotrimer.

The enzyme catalyses S-methyl-5'-thioadenosine + phosphate = 5-(methylsulfanyl)-alpha-D-ribose 1-phosphate + adenine. It functions in the pathway amino-acid biosynthesis; L-methionine biosynthesis via salvage pathway; S-methyl-5-thio-alpha-D-ribose 1-phosphate from S-methyl-5'-thioadenosine (phosphorylase route): step 1/1. In terms of biological role, catalyzes the reversible phosphorylation of S-methyl-5'-thioadenosine (MTA) to adenine and 5-methylthioribose-1-phosphate. Involved in the breakdown of MTA, a major by-product of polyamine biosynthesis. Responsible for the first step in the methionine salvage pathway after MTA has been generated from S-adenosylmethionine. Has broad substrate specificity with 6-aminopurine nucleosides as preferred substrates. The chain is S-methyl-5'-thioadenosine phosphorylase from Leptospira interrogans serogroup Icterohaemorrhagiae serovar Lai (strain 56601).